Consider the following 144-residue polypeptide: Large ribosomal subunit protein uL15 (144 aa).

Polar residues predominate over residues 1–10; the sequence is MYLNTISPSR. The tract at residues 1 to 51 is disordered; the sequence is MYLNTISPSRGSKHLSKRVGRGIGSGLGKTGGRGHKGQKSRSGGKVRLGFE. Positions 11–20 are enriched in basic residues; sequence GSKHLSKRVG. A compositionally biased stretch (gly residues) spans 21–31; sequence RGIGSGLGKTG. A compositionally biased stretch (basic residues) spans 32–44; sequence GRGHKGQKSRSGG.

It belongs to the universal ribosomal protein uL15 family. As to quaternary structure, part of the 50S ribosomal subunit.

In terms of biological role, binds to the 23S rRNA. The chain is Large ribosomal subunit protein uL15 from Blochmanniella pennsylvanica (strain BPEN).